The chain runs to 341 residues: Serpentine receptor class beta-1 (341 aa).

7 consecutive transmembrane segments (helical) span residues 22 to 42 (AQFW…IFLL), 66 to 86 (FLFA…PLFI), 102 to 122 (GQLS…GFSI), 141 to 161 (LGPL…FTVF), 188 to 208 (CWIL…ILLV), 240 to 260 (LIVS…TIFI), and 279 to 299 (GVYI…IKAL).

Belongs to the nematode receptor-like protein srb family.

The protein localises to the membrane. The chain is Serpentine receptor class beta-1 (srb-1) from Caenorhabditis elegans.